We begin with the raw amino-acid sequence, 174 residues long: Adenine phosphoribosyltransferase (174 aa).

Belongs to the purine/pyrimidine phosphoribosyltransferase family. As to quaternary structure, homodimer.

The protein localises to the cytoplasm. It catalyses the reaction AMP + diphosphate = 5-phospho-alpha-D-ribose 1-diphosphate + adenine. The protein operates within purine metabolism; AMP biosynthesis via salvage pathway; AMP from adenine: step 1/1. Catalyzes a salvage reaction resulting in the formation of AMP, that is energically less costly than de novo synthesis. The sequence is that of Adenine phosphoribosyltransferase from Dichelobacter nodosus (strain VCS1703A).